Here is a 104-residue protein sequence, read N- to C-terminus: Large ribosomal subunit protein uL24 (104 aa).

This sequence belongs to the universal ribosomal protein uL24 family. In terms of assembly, part of the 50S ribosomal subunit.

In terms of biological role, one of two assembly initiator proteins, it binds directly to the 5'-end of the 23S rRNA, where it nucleates assembly of the 50S subunit. Functionally, one of the proteins that surrounds the polypeptide exit tunnel on the outside of the subunit. The protein is Large ribosomal subunit protein uL24 of Shewanella loihica (strain ATCC BAA-1088 / PV-4).